A 362-amino-acid chain; its full sequence is Alternative oxidase, mitochondrial (362 aa).

A mitochondrion-targeting transit peptide spans 1-64 (MNTPKVNILH…RNFSTTSVTR (64 aa)). A helical transmembrane segment spans residues 156 to 176 (LVRFIFLESIAGVPGMVAGML). Fe cation is bound by residues Glu163, Glu202, and His205. A helical transmembrane segment spans residues 222–242 (LILGAQGVFFNAMFLSYLISP). 3 residues coordinate Fe cation: Glu253, Glu310, and His313.

The protein belongs to the alternative oxidase family. Homodimer; disulfide-linked. The cofactor is Fe cation.

It localises to the mitochondrion inner membrane. Catalyzes cyanide-resistant oxygen consumption. May increase respiration when the cytochrome respiratory pathway is restricted, or in response to low temperatures. The chain is Alternative oxidase, mitochondrial (aod-1) from Neurospora crassa (strain ATCC 24698 / 74-OR23-1A / CBS 708.71 / DSM 1257 / FGSC 987).